The chain runs to 140 residues: Nucleoside diphosphate kinase (140 aa).

ATP-binding residues include Lys11, Phe59, Arg87, Thr93, Arg104, and Asn114. His117 (pros-phosphohistidine intermediate) is an active-site residue.

This sequence belongs to the NDK family. In terms of assembly, homotetramer. Mg(2+) is required as a cofactor.

The protein localises to the cytoplasm. It carries out the reaction a 2'-deoxyribonucleoside 5'-diphosphate + ATP = a 2'-deoxyribonucleoside 5'-triphosphate + ADP. The catalysed reaction is a ribonucleoside 5'-diphosphate + ATP = a ribonucleoside 5'-triphosphate + ADP. Major role in the synthesis of nucleoside triphosphates other than ATP. The ATP gamma phosphate is transferred to the NDP beta phosphate via a ping-pong mechanism, using a phosphorylated active-site intermediate. In Ruegeria sp. (strain TM1040) (Silicibacter sp.), this protein is Nucleoside diphosphate kinase.